The primary structure comprises 519 residues: Dideacetyl fusicoccin A C-19 hydroxylase (519 aa).

Residues Leu-16–Ser-36 traverse the membrane as a helical segment. Asn-177, Asn-327, Asn-414, and Asn-432 each carry an N-linked (GlcNAc...) asparagine glycan. Cys-454 serves as a coordination point for heme.

The protein belongs to the cytochrome P450 family. The cofactor is heme.

It is found in the membrane. The protein operates within mycotoxin biosynthesis. In terms of biological role, cytochrome P450 monooxygenase; part of the 2 gene clusters that mediate the biosynthesis of fusicoccins, diterpene glucosides that display phytohormone-like activity and function as potent activators of plasma membrane H(+)-ATPases in plants by modifying 14-3-3 proteins and cause the plant disease constriction canker. The first step in the pathway is performed by the fusicoccadiene synthase PaFS that possesses both prenyl transferase and terpene cyclase activity, converting isopentenyl diphosphate and dimethylallyl diphosphate into geranylgeranyl diphosphate (GGDP) and successively converting GGDP into fusicocca-2,10(14)-diene, a precursor for fusicoccin H. The second step is the oxidation at the C-8 position by the cytochrome P450 monooxygenase PaP450-2 to yield fusicocca-2,10(14)-diene-8-beta-ol. The cytochrome P450 monooxygenase PaP450-1 then catalyzes the hydroxylation at the C-16 position to produce fusicocca-2,10(14)-diene-8-beta,16-diol. The dioxygenase fc-dox then catalyzes the 16-oxydation of fusicocca-2,10(14)-diene-8-beta,16-diol to yield an aldehyde (8-beta-hydroxyfusicocca-1,10(14)-dien-16-al). The short-chain dehydrogenase/reductase fc-sdr catalyzes the reduction of the aldehyde to yield fusicocca-1,10(14)-diene-8-beta,16-diol. The next step is the hydroxylation at C-9 performed by the cytochrome P450 monooxygenase PaP450-3 that leads to fusicoccin H aglycon which is glycosylated to fusicoccin H by the O-glycosyltransferase PaGT. Hydroxylation at C-12 by the cytochrome P450 monooxygenase PaP450-4 leads then to the production of fusicoccin Q and is followed by methylation by the O-methyltransferase PaMT to yield fusicoccin P. Fusicoccin P is further converted to fusicoccin J via prenylation by the O-glucose prenyltransferase PaPT. Cytochrome P450 monooxygenase PaP450-5 then performs hydroxylation at C-19 to yield dideacetyl-fusicoccin A which is acetylated to 3'-O-deacetyl-fusicoccin A by the O-acetyltransferase PaAT-2. Finally, a another acetylation by the O-acetyltransferase PaAT-1 yields fusicoccin A. This Phomopsis amygdali (Fusicoccum amygdali) protein is Dideacetyl fusicoccin A C-19 hydroxylase.